The sequence spans 323 residues: MTRYDSLLQALGNTPLVGLQRLSPRWDDGRDGPHVRLWAKLEDRNPTGSIKDRPAVRMIEQAEADGLLRPGATILEPTSGNTGISLAMAARLKGYRLICVMPENTSVERRQLLELYGAQIIFSAAEGGSNTAVATAKELAATNPSWVMLYQYGNPANTDSHYCGTGPELLADLPEITHFVAGLGTTGTLMGTGRFLREHVANVKIVAAEPRYGEGVYALRNMDEGFVPELYDPEILTARYSVGAVDAVRRTRELVHTEGIFAGISTGAVLHAALGVGAGALAAGERADIALVVADAGWKYLSTGAYAGSLDDAETALEGQLWA.

Lys-51 carries the N6-(pyridoxal phosphate)lysine modification. Pyridoxal 5'-phosphate is bound by residues Asn-81 and 184-188; that span reads GTTGT. Position 220 (Arg-220) interacts with substrate. Residue Ser-265 coordinates pyridoxal 5'-phosphate.

Belongs to the cysteine synthase/cystathionine beta-synthase family. As to quaternary structure, homodimer. Pyridoxal 5'-phosphate serves as cofactor.

The catalysed reaction is [CysO sulfur-carrier protein]-C-terminal-Gly-aminoethanethioate + O-phospho-L-serine + H(+) = [CysO sulfur-carrier protein]-Gly-NH-CH2-C(O)-S-L-Cys + phosphate. The protein operates within amino-acid biosynthesis; L-cysteine biosynthesis. Functionally, catalyzes the formation of a covalent CysO-cysteine adduct via a sulfur transfer, using the thiocarboxylated sulfur carrier protein CysO-COSH as sulfur donor and O-phospho-L-serine (OPS) as sulfur acceptor. Can also use sodium sulfide as sulfur donor in vitro, albeit with less efficiency. This chain is O-phosphoserine sulfhydrylase (cysM), found in Mycobacterium bovis (strain ATCC BAA-935 / AF2122/97).